Consider the following 203-residue polypeptide: Small ribosomal subunit protein uS4 (203 aa).

One can recognise an S4 RNA-binding domain in the interval 93–156 (RRLDNVVYRL…AKVPAILEAV (64 aa)).

It belongs to the universal ribosomal protein uS4 family. In terms of assembly, part of the 30S ribosomal subunit. Contacts protein S5. The interaction surface between S4 and S5 is involved in control of translational fidelity.

Its function is as follows. One of the primary rRNA binding proteins, it binds directly to 16S rRNA where it nucleates assembly of the body of the 30S subunit. With S5 and S12 plays an important role in translational accuracy. The polypeptide is Small ribosomal subunit protein uS4 (Streptococcus thermophilus (strain CNRZ 1066)).